Reading from the N-terminus, the 73-residue chain is Large ribosomal subunit protein bL31 (73 aa).

Positions 16, 18, 36, and 39 each coordinate Zn(2+).

Belongs to the bacterial ribosomal protein bL31 family. Type A subfamily. Part of the 50S ribosomal subunit. Zn(2+) is required as a cofactor.

Its function is as follows. Binds the 23S rRNA. The polypeptide is Large ribosomal subunit protein bL31 (Desulfotalea psychrophila (strain LSv54 / DSM 12343)).